Consider the following 86-residue polypeptide: Large ribosomal subunit protein bL27 (86 aa).

A disordered region spans residues 1-26 (MAHKKAAGSTRNGRDSESKRLGVKRY).

Belongs to the bacterial ribosomal protein bL27 family.

The sequence is that of Large ribosomal subunit protein bL27 from Marinobacter nauticus (strain ATCC 700491 / DSM 11845 / VT8) (Marinobacter aquaeolei).